We begin with the raw amino-acid sequence, 563 residues long: MAEMFKVESPHVRYLKDVIEADYSYDTTQVYEEKGVTKVKPCSTKFTFHTERKVPKLGVMLVGWGGNNGTTVTAAVLANRLGLSWMTKTGKKVANYYGSLFQSSTVCLGRGSSGEVFVPFRDLLPMVNPNDLVFDGWDISSLNLADAMFRAEVLDWQLQEQLRPYMEKMKPRPSIYIPEFIAANQEDRADHTIHGTKAEQVQKIREDIQDFKRTSGVDKVIVLWTANTERFCDIIPGVNDTADNLLKAIENGLEVSPSTMFAVASILEGCAFINGSPQNTFVPGAIELAIRHNVFIGGDDFKSGQTKIKSVLMDFLVSAGLKPVSIVSYNHLGNNDGKNLSAPQQFRSKEISKSNVVDDMVQSNPILYGPNEKPDHCVVIKYVPYVGDSKRAMDEYTSEIMMGGANTIVLHNTCEDSLLASPIFLDLVLLTELCQRITFRTETDQEFQTFHSVLSILSFLCKAPLVPAGTPVVNAFFRQRNCIENILRACLGLSPQNHMMLEHKMQRSFVSLKRPSVDCNAYPISSKKGNGVNGFHPPGISNGLSHSNGLGKTVISSDIEIEN.

This sequence belongs to the myo-inositol 1-phosphate synthase family. Requires NAD(+) as cofactor.

The protein localises to the cytoplasm. The catalysed reaction is D-glucose 6-phosphate = 1D-myo-inositol 3-phosphate. Its pathway is polyol metabolism; myo-inositol biosynthesis; myo-inositol from D-glucose 6-phosphate: step 1/2. In terms of biological role, key enzyme in myo-inositol biosynthesis pathway that catalyzes the conversion of glucose 6-phosphate to 1-myo-inositol 1-phosphate in a NAD-dependent manner. Rate-limiting enzyme in the synthesis of all inositol-containing compounds. The sequence is that of Inositol-3-phosphate synthase 1-B (isyna1-b) from Xenopus laevis (African clawed frog).